Consider the following 189-residue polypeptide: dCTP deaminase (189 aa).

Residues 112–117, 136–138, Gln157, Tyr171, and Gln181 contribute to the dCTP site; these read KSTYAR and TLE. Glu138 (proton donor/acceptor) is an active-site residue.

The protein belongs to the dCTP deaminase family. Homotrimer.

It carries out the reaction dCTP + H2O + H(+) = dUTP + NH4(+). The protein operates within pyrimidine metabolism; dUMP biosynthesis; dUMP from dCTP (dUTP route): step 1/2. Catalyzes the deamination of dCTP to dUTP. This is dCTP deaminase from Xanthomonas axonopodis pv. citri (strain 306).